Consider the following 227-residue polypeptide: Uracil-DNA glycosylase (227 aa).

The active-site Proton acceptor is aspartate 68.

This sequence belongs to the uracil-DNA glycosylase (UDG) superfamily. UNG family.

It is found in the cytoplasm. The enzyme catalyses Hydrolyzes single-stranded DNA or mismatched double-stranded DNA and polynucleotides, releasing free uracil.. Excises uracil residues from the DNA which can arise as a result of misincorporation of dUMP residues by DNA polymerase or due to deamination of cytosine. This is Uracil-DNA glycosylase from Mycolicibacterium smegmatis (strain ATCC 700084 / mc(2)155) (Mycobacterium smegmatis).